Consider the following 340-residue polypeptide: L-threonine 3-dehydrogenase (340 aa).

A Zn(2+)-binding site is contributed by Cys38. Active-site charge relay system residues include Thr40 and His43. Positions 63, 64, 93, 96, 99, and 107 each coordinate Zn(2+). NAD(+) contacts are provided by residues Ile175, Asp195, Arg200, 261-263 (LGI), and 285-286 (IY).

The protein belongs to the zinc-containing alcohol dehydrogenase family. Homotetramer. It depends on Zn(2+) as a cofactor.

The protein localises to the cytoplasm. The catalysed reaction is L-threonine + NAD(+) = (2S)-2-amino-3-oxobutanoate + NADH + H(+). Its pathway is amino-acid degradation; L-threonine degradation via oxydo-reductase pathway; glycine from L-threonine: step 1/2. Catalyzes the NAD(+)-dependent oxidation of L-threonine to 2-amino-3-ketobutyrate. This chain is L-threonine 3-dehydrogenase, found in Xanthomonas axonopodis pv. citri (strain 306).